The primary structure comprises 413 residues: Cardiolipin synthase B (413 aa).

PLD phosphodiesterase domains are found at residues 108 to 135 (VFRRMHRKIVVIDARIAFIGGLNYSAEH) and 285 to 312 (RRRPLHGKVALMDDHWATVGSSNLDPLS). Active-site residues include His113, Lys115, Asp120, His290, Lys292, and Asp297. Residues 390–413 (VGPPAQPTMETQDRVETENTGVKP) are disordered.

It belongs to the phospholipase D family. Cardiolipin synthase subfamily. ClsB sub-subfamily.

Its subcellular location is the cell membrane. It carries out the reaction 2 a 1,2-diacyl-sn-glycero-3-phospho-(1'-sn-glycerol) = a cardiolipin + glycerol. Its function is as follows. Catalyzes the phosphatidyl group transfer from one phosphatidylglycerol molecule to another to form cardiolipin (CL) (diphosphatidylglycerol) and glycerol. In Escherichia coli O6:H1 (strain CFT073 / ATCC 700928 / UPEC), this protein is Cardiolipin synthase B.